The primary structure comprises 268 residues: uncharacterized protein (268 aa).

A signal peptide spans 1-18 (MRGFLLLSLGVFSFSALA). Domain regions lie at residues 24-184 (SHDL…ELLP) and 185-268 (SPAT…NWLR). Residues Cys-110 and Cys-115 are joined by a disulfide bond.

As to quaternary structure, monomer.

Its subcellular location is the periplasm. This is an uncharacterized protein from Pseudomonas aeruginosa (strain ATCC 15692 / DSM 22644 / CIP 104116 / JCM 14847 / LMG 12228 / 1C / PRS 101 / PAO1).